The sequence spans 540 residues: Protein SOSEKI 3 (540 aa).

Positions 32–123 are DIX-like oligomerization domain; sequence KKVQIVYYLS…YVLKGSELFD (92 aa). Disordered regions lie at residues 147-201 and 219-294; these read EPPS…DAKN and ADAS…SSLG. 2 stretches are compositionally biased toward low complexity: residues 150–163 and 185–194; these read SSRS…SSSM and RSVSSSGVSP. Positions 221-244 are enriched in polar residues; that stretch reads ASTQTDETVSGRSKTPIETFSRGV. Acidic residues predominate over residues 246–256; sequence TDEDVSSEPET. The span at 280 to 292 shows a compositional bias: low complexity; the sequence is NSVSPPFSNSASS. The Association to cell membranes signature appears at 342–343; sequence CG. The segment at 412 to 492 is disordered; it reads KKDAADSNAS…KNIPCTTKTH (81 aa). Over residues 418-437 the composition is skewed to polar residues; sequence SNASLKRSSSYNGDRASNQM. Residues 471–482 are compositionally biased toward basic and acidic residues; sequence SEKRRDSSEDTT.

Belongs to the SOSEKI family. Homodimer. Forms long polymer filaments with other SOKs proteins polymers (e.g. SOK1, SOK2, SOK3 and SOK4) crucial for polar localization and biological activity. Binds to ANGUSTIFOLIA (AN). As to expression, expressed during embryogenesis and in roots.

It is found in the cell membrane. Functionally, SOSEKI proteins (SOK1-5) locally interpret global polarity cues and can influence cell division orientation to coordinate cell polarization relative to body axes, probably by guiding ANGUSTIFOLIA (AN) polarized localization. The polypeptide is Protein SOSEKI 3 (Arabidopsis thaliana (Mouse-ear cress)).